Consider the following 72-residue polypeptide: Conotoxin VnMKLT2-0221 (72 aa).

An N-terminal signal peptide occupies residues 1–22 (MKLTCVLIVAVLFLTACQLTTA). The propeptide occupies 23–45 (ASYARSERQHPDLGSSDQNSKLT). Residues 26 to 45 (ARSERQHPDLGSSDQNSKLT) are disordered. 3 cysteine pairs are disulfide-bonded: Cys-48-Cys-62, Cys-55-Cys-66, and Cys-61-Cys-71.

It belongs to the conotoxin O1 superfamily. As to expression, expressed by the venom duct.

The protein localises to the secreted. The protein is Conotoxin VnMKLT2-0221 of Conus ventricosus (Mediterranean cone).